Reading from the N-terminus, the 248-residue chain is Mannose-binding protein C (248 aa).

The signal sequence occupies residues Met1–Ser20. The region spanning Gly42 to Ala99 is the Collagen-like domain. Residues Ile43–Arg112 form a disordered region. At Pro47 the chain carries 4-hydroxyproline. The span at Lys49–Glu61 shows a compositional bias: basic and acidic residues. 4-hydroxyproline occurs at positions 73, 79, 82, and 88. Positions Arg112–Leu130 form a coiled coil. The region spanning Val134–Glu245 is the C-type lectin domain. Disulfide bonds link Cys155–Cys244 and Cys222–Cys236.

Oligomeric complex of 3 or more homotrimers. Interacts with MASP1 and MASP2. Interacts with MEP1A and MEP1B and may inhibit their catalytic activity. Post-translationally, hydroxylation on proline residues within the sequence motif, GXPG, is most likely to be 4-hydroxy as this fits the requirement for 4-hydroxylation in vertebrates.

It localises to the secreted. In terms of biological role, calcium-dependent lectin involved in innate immune defense. Binds mannose, fucose and N-acetylglucosamine on different microorganisms and activates the lectin complement pathway. Binds to late apoptotic cells, as well as to apoptotic blebs and to necrotic cells, but not to early apoptotic cells, facilitating their uptake by macrophages. This chain is Mannose-binding protein C (MBL2), found in Callithrix jacchus (White-tufted-ear marmoset).